We begin with the raw amino-acid sequence, 768 residues long: Phosphoribosylformylglycinamidine synthase subunit PurL (768 aa).

Residue His-53 is part of the active site. Tyr-56 is an ATP binding site. Glu-98 serves as a coordination point for Mg(2+). Substrate is bound by residues 99–102 (SHNH) and Arg-121. His-100 functions as the Proton acceptor in the catalytic mechanism. Mg(2+) is bound at residue Asp-122. Position 253 (Gln-253) interacts with substrate. Asp-285 provides a ligand contact to Mg(2+). Residue 328–330 (ETQ) coordinates substrate. ATP contacts are provided by Asp-516 and Gly-561. Asn-562 serves as a coordination point for Mg(2+). Residue Ser-564 participates in substrate binding.

It belongs to the FGAMS family. As to quaternary structure, monomer. Part of the FGAM synthase complex composed of 1 PurL, 1 PurQ and 2 PurS subunits.

The protein resides in the cytoplasm. It catalyses the reaction N(2)-formyl-N(1)-(5-phospho-beta-D-ribosyl)glycinamide + L-glutamine + ATP + H2O = 2-formamido-N(1)-(5-O-phospho-beta-D-ribosyl)acetamidine + L-glutamate + ADP + phosphate + H(+). The protein operates within purine metabolism; IMP biosynthesis via de novo pathway; 5-amino-1-(5-phospho-D-ribosyl)imidazole from N(2)-formyl-N(1)-(5-phospho-D-ribosyl)glycinamide: step 1/2. Part of the phosphoribosylformylglycinamidine synthase complex involved in the purines biosynthetic pathway. Catalyzes the ATP-dependent conversion of formylglycinamide ribonucleotide (FGAR) and glutamine to yield formylglycinamidine ribonucleotide (FGAM) and glutamate. The FGAM synthase complex is composed of three subunits. PurQ produces an ammonia molecule by converting glutamine to glutamate. PurL transfers the ammonia molecule to FGAR to form FGAM in an ATP-dependent manner. PurS interacts with PurQ and PurL and is thought to assist in the transfer of the ammonia molecule from PurQ to PurL. This chain is Phosphoribosylformylglycinamidine synthase subunit PurL, found in Methanothrix thermoacetophila (strain DSM 6194 / JCM 14653 / NBRC 101360 / PT) (Methanosaeta thermophila).